Here is a 306-residue protein sequence, read N- to C-terminus: Mitochondrial brown fat uncoupling protein 1 (306 aa).

Residues 1 to 10 are Mitochondrial intermembrane-facing; that stretch reads MVGTTTTDVP. A helical transmembrane segment spans residues 11–32; the sequence is PTMGVKIFSAGVAACLADVITF. Solcar repeat units lie at residues 11–102, 110–200, and 209–294; these read PTMG…VQEF, PSLG…MKGA, and DDVP…LKGE. Over 33–73 the chain is Mitochondrial matrix; sequence PLDTAKVRQQIQGEFPITSGIRYKGVLGTITTLAKTEGPLK. Lysine 56 contributes to the fatty acid 16:0 binding site. A helical membrane pass occupies residues 74 to 96; sequence LYSGLPAGLQRQISFASLRIGLY. At 97–115 the chain is on the mitochondrial intermembrane side; sequence DTVQEFFTSGEETPSLGSK. Residues 116–132 traverse the membrane as a helical segment; sequence ISAGLTTGGVAVFIGQP. Topologically, residues 133-177 are mitochondrial matrix; it reads TEVVKVRLQAQSHLHGLKPRYTGTYNAYRIIATTESLTSLWKGTT. The chain crosses the membrane as a helical span at residues 178–194; it reads PNLLRNVIINCTELVTY. The Mitochondrial intermembrane segment spans residues 195 to 211; sequence DLMKGALVRNEILADDV. A helical membrane pass occupies residues 212-231; the sequence is PCHFVSALIAGFCTTLLSSP. The Mitochondrial matrix portion of the chain corresponds to 232-265; the sequence is VDVVKTRFINSPPGQYASVPNCAMTMFTKEGPTA. Cysteine 253 is modified (cysteine sulfenic acid (-SOH)). The chain crosses the membrane as a helical span at residues 266-288; it reads FFKGFVPSFLRLGSWNVIMFVCF. Lysine 268 contacts fatty acid 16:0. At 289-306 the chain is on the mitochondrial intermembrane side; it reads EKLKGELMRSRQTVDCAT.

It belongs to the mitochondrial carrier (TC 2.A.29) family. Most probably functions as a monomer. Binds one purine nucleotide per monomer. However, has also been suggested to function as a homodimer or a homotetramer. Tightly associates with cardiolipin in the mitochondrion inner membrane; may stabilize and regulate its activity. Post-translationally, may undergo sulfenylation upon cold exposure. May increase the sensitivity of UCP1 thermogenic function to the activation by noradrenaline probably through structural effects. May undergo ubiquitin-mediated proteasomal degradation. Brown adipose tissue.

Its subcellular location is the mitochondrion inner membrane. The catalysed reaction is H(+)(in) = H(+)(out). Its activity is regulated as follows. Has no constitutive proton transporter activity and has to be activated by long-chain fatty acids/LCFAs. Inhibited by purine nucleotides. Both purine nucleotides and LCFAs bind the cytosolic side of the transporter and directly compete to activate or inhibit it. Activated by noradrenaline and reactive oxygen species. Despite lacking canonical translational encoding for selenocysteine, a small pool of the protein has been observed to selectively incorporate selenocysteine at 'Cys-253'. Selenocysteine-modified protein is highly sensitive to redox modification and may constitute a pool of protein highly sensitive to activation by elevated levels of reactive oxygen species (ROS). Functionally, mitochondrial protein responsible for thermogenic respiration, a specialized capacity of brown adipose tissue and beige fat that participates in non-shivering adaptive thermogenesis to temperature and diet variations and more generally to the regulation of energy balance. Functions as a long-chain fatty acid/LCFA and proton symporter, simultaneously transporting one LCFA and one proton through the inner mitochondrial membrane. However, LCFAs remaining associated with the transporter via their hydrophobic tails, it results in an apparent transport of protons activated by LCFAs. Thereby, dissipates the mitochondrial proton gradient and converts the energy of substrate oxydation into heat instead of ATP. Regulates the production of reactive oxygen species/ROS by mitochondria. This chain is Mitochondrial brown fat uncoupling protein 1, found in Oryctolagus cuniculus (Rabbit).